The sequence spans 256 residues: Ubiquinone/menaquinone biosynthesis C-methyltransferase UbiE (256 aa).

Residues Thr79, Asp100, and 128-129 (DA) each bind S-adenosyl-L-methionine.

It belongs to the class I-like SAM-binding methyltransferase superfamily. MenG/UbiE family.

It catalyses the reaction a 2-demethylmenaquinol + S-adenosyl-L-methionine = a menaquinol + S-adenosyl-L-homocysteine + H(+). The enzyme catalyses a 2-methoxy-6-(all-trans-polyprenyl)benzene-1,4-diol + S-adenosyl-L-methionine = a 5-methoxy-2-methyl-3-(all-trans-polyprenyl)benzene-1,4-diol + S-adenosyl-L-homocysteine + H(+). It participates in quinol/quinone metabolism; menaquinone biosynthesis; menaquinol from 1,4-dihydroxy-2-naphthoate: step 2/2. The protein operates within cofactor biosynthesis; ubiquinone biosynthesis. Functionally, methyltransferase required for the conversion of demethylmenaquinol (DMKH2) to menaquinol (MKH2) and the conversion of 2-polyprenyl-6-methoxy-1,4-benzoquinol (DDMQH2) to 2-polyprenyl-3-methyl-6-methoxy-1,4-benzoquinol (DMQH2). The sequence is that of Ubiquinone/menaquinone biosynthesis C-methyltransferase UbiE from Ectopseudomonas mendocina (strain ymp) (Pseudomonas mendocina).